A 155-amino-acid chain; its full sequence is Small ribosomal subunit protein uS7cz/uS7cy (155 aa).

This sequence belongs to the universal ribosomal protein uS7 family. As to quaternary structure, part of the 30S ribosomal subunit.

The protein resides in the plastid. It localises to the chloroplast. One of the primary rRNA binding proteins, it binds directly to 16S rRNA where it nucleates assembly of the head domain of the 30S subunit. This is Small ribosomal subunit protein uS7cz/uS7cy (rps7-A) from Citrus sinensis (Sweet orange).